The following is a 249-amino-acid chain: ATP synthase subunits region ORF 6 (249 aa).

This Fuscovulum blasticum (Rhodobacter blasticus) protein is ATP synthase subunits region ORF 6.